Consider the following 643-residue polypeptide: 1-deoxy-D-xylulose-5-phosphate synthase (643 aa).

Thiamine diphosphate contacts are provided by residues H78 and 119–121 (AHS). D150 lines the Mg(2+) pocket. Residues 151–152 (GS), N179, Y288, and E370 each bind thiamine diphosphate. Position 179 (N179) interacts with Mg(2+).

The protein belongs to the transketolase family. DXPS subfamily. Homodimer. The cofactor is Mg(2+). Requires thiamine diphosphate as cofactor.

It carries out the reaction D-glyceraldehyde 3-phosphate + pyruvate + H(+) = 1-deoxy-D-xylulose 5-phosphate + CO2. The protein operates within metabolic intermediate biosynthesis; 1-deoxy-D-xylulose 5-phosphate biosynthesis; 1-deoxy-D-xylulose 5-phosphate from D-glyceraldehyde 3-phosphate and pyruvate: step 1/1. Functionally, catalyzes the acyloin condensation reaction between C atoms 2 and 3 of pyruvate and glyceraldehyde 3-phosphate to yield 1-deoxy-D-xylulose-5-phosphate (DXP). The chain is 1-deoxy-D-xylulose-5-phosphate synthase from Brucella melitensis biotype 2 (strain ATCC 23457).